We begin with the raw amino-acid sequence, 969 residues long: ATP-dependent RNA helicase DBP10 (969 aa).

2 disordered regions span residues 1 to 73 (MVKN…KVED) and 78 to 97 (SLEL…DDDD). The segment covering 32–59 (SDSESDDSSDGSDEEVQDVIEYSSDEEE) has biased composition (acidic residues). The Q motif motif lies at 115–143 (GSFASFGLSKLILVNISKRGFRQPTPIQR). Residues 146–318 (IPLILQNRDI…KAGLVNPVLV (173 aa)) enclose the Helicase ATP-binding domain. Residue 159–166 (ARTGSGKT) coordinates ATP. The short motif at 266–269 (DEAD) is the DEAD box element. Disordered stretches follow at residues 366–402 (QLND…PKAN), 860–924 (KTGA…LERG), and 946–969 (IRKD…KRKF). The segment covering 374–383 (DSDESAEEDE) has biased composition (acidic residues). Positions 386–398 (KRRKRKSFNRKAM) are enriched in basic residues. The 148-residue stretch at 396–543 (KAMPKANELP…PMYEALERLS (148 aa)) folds into the Helicase C-terminal domain. The span at 897–921 (EKAPRLPDKKRDDYHKQKKKVESAL) shows a compositional bias: basic and acidic residues. Over residues 958–969 (AKNARPSKKRKF) the composition is skewed to basic residues.

Belongs to the DEAD box helicase family. DDX54/DBP10 subfamily.

Its subcellular location is the nucleus. It is found in the nucleolus. It catalyses the reaction ATP + H2O = ADP + phosphate + H(+). Functionally, ATP-binding RNA helicase involved in the biogenesis of 60S ribosomal subunits and is required for the normal formation of 25S and 5.8S rRNAs. The protein is ATP-dependent RNA helicase DBP10 (DBP10) of Candida glabrata (strain ATCC 2001 / BCRC 20586 / JCM 3761 / NBRC 0622 / NRRL Y-65 / CBS 138) (Yeast).